The sequence spans 626 residues: MHYPKVYDVIVIGGGHAGTEAALAAARMGRQTLLLTHNIETLGQMSCNPAIGGIGKSHLVREIDALGGAMALAADKGGIQFRILNSRKGAAVRATRAQADRVRYKAAIREILENQANLDIFQQAADDLIVEGDTVKGVVTQMGIRFDAKTVVLTTGTFLGGVIHVGLEKSSGGRAGDPPSIALAQRLRELKLPVGRLKTGTPPRIDARSVDFSVMTPQPGDFPSPVMSFMGDVSMHPEQVNCYITHTNEKTHDIIRGGLDRSPMYTGVIEGVGPRYCPSIEDKIHRFSDKDSHQVFLEPEGLDTHELYPNGISTSLPFDVQFELVRSIRGMENAHILRPGYAIEYDYFNPQALKFTLETKAINGLYFAGQINGTTGYEEAGAQGLLAGLNAARRAWEQEEWTPKRDQAYMGVLVDDLITLGTKEPYRMFTSRAEYRLMLREDNADQRLTTIGRELGLVDDVRWAAYCEKMEAVERETSRLQHLWAAPNNPMGKKFVEMTGADLSKECSAIDLLKRPNINFGQIAELTGSEVSQQVGEQIEIAVKYEGYINRQHEDVAQLKRLEETKIPADFDYDVVSGLSREITQKLKTVRPETLAQASRIPGVTPAAVQLVMITIRKNNMTKKTA.

13–18 (GGGHAG) contributes to the FAD binding site. Residue 273 to 287 (GPRYCPSIEDKIHRF) participates in NAD(+) binding.

The protein belongs to the MnmG family. In terms of assembly, homodimer. Heterotetramer of two MnmE and two MnmG subunits. Requires FAD as cofactor.

It localises to the cytoplasm. Functionally, NAD-binding protein involved in the addition of a carboxymethylaminomethyl (cmnm) group at the wobble position (U34) of certain tRNAs, forming tRNA-cmnm(5)s(2)U34. In Acinetobacter baumannii (strain SDF), this protein is tRNA uridine 5-carboxymethylaminomethyl modification enzyme MnmG.